The primary structure comprises 197 residues: MSDRIAQVTRNTLETKISVSLNLDGAGKGVFNTGVPFLEHMMDQIARHGMIDLDVTCDGDTHIDDHHSVEDIGITIGQAIAKAVGDKKGIRRYGHAYVPLDEALSRVVIDFSGRPGLVMDIPFTQKRIGQFDTELFWEFFQGFVNHAGVTLHVDNLRGHNAHHQIETVFKAFGRALRMALEKDPRMEGIMPSTKGSL.

Belongs to the imidazoleglycerol-phosphate dehydratase family.

It localises to the cytoplasm. The catalysed reaction is D-erythro-1-(imidazol-4-yl)glycerol 3-phosphate = 3-(imidazol-4-yl)-2-oxopropyl phosphate + H2O. It functions in the pathway amino-acid biosynthesis; L-histidine biosynthesis; L-histidine from 5-phospho-alpha-D-ribose 1-diphosphate: step 6/9. The polypeptide is Imidazoleglycerol-phosphate dehydratase (Cellvibrio japonicus (strain Ueda107) (Pseudomonas fluorescens subsp. cellulosa)).